Here is a 310-residue protein sequence, read N- to C-terminus: Ribosomal RNA small subunit methyltransferase H (310 aa).

S-adenosyl-L-methionine is bound by residues 33 to 35 (GGH), aspartate 52, phenylalanine 79, aspartate 98, and glutamine 105.

It belongs to the methyltransferase superfamily. RsmH family.

It localises to the cytoplasm. The catalysed reaction is cytidine(1402) in 16S rRNA + S-adenosyl-L-methionine = N(4)-methylcytidine(1402) in 16S rRNA + S-adenosyl-L-homocysteine + H(+). Functionally, specifically methylates the N4 position of cytidine in position 1402 (C1402) of 16S rRNA. In Campylobacter jejuni (strain RM1221), this protein is Ribosomal RNA small subunit methyltransferase H.